We begin with the raw amino-acid sequence, 47 residues long: Large ribosomal subunit protein bL34 (47 aa).

Belongs to the bacterial ribosomal protein bL34 family.

The chain is Large ribosomal subunit protein bL34 (rpmH) from Mycolicibacterium smegmatis (strain ATCC 700084 / mc(2)155) (Mycobacterium smegmatis).